A 387-amino-acid polypeptide reads, in one-letter code: 2-alkyl-3-oxoalkanoate reductase (387 aa).

Catalysis depends on Y190, which acts as the Proton acceptor. NADP(+) is bound at residue K194.

It belongs to the 3-beta-HSD family.

The catalysed reaction is a (2R,3S)-2-alkyl-3-hydroxyalkanoate + NADP(+) = an (R)-2-alkyl-3-oxoalkanoate + NADPH + H(+). Its function is as follows. Involved in olefin biosynthesis. Catalyzes the reversible stereospecific NADPH-dependent reduction of 2-alkyl-3-oxoalkanoic acids to 2-alkyl-3-hydroxyalkanoic acids. The S.oneidensis oleABCD genes produce 3,6,9,12,15,19,22,25,28-hentriacontanonaene, which may aid the cells in adapting to a sudden drop in temperature. In Shewanella oneidensis (strain ATCC 700550 / JCM 31522 / CIP 106686 / LMG 19005 / NCIMB 14063 / MR-1), this protein is 2-alkyl-3-oxoalkanoate reductase.